A 355-amino-acid chain; its full sequence is Protein RecA (355 aa).

67 to 74 (GPESSGKT) lines the ATP pocket.

It belongs to the RecA family.

It localises to the cytoplasm. In terms of biological role, can catalyze the hydrolysis of ATP in the presence of single-stranded DNA, the ATP-dependent uptake of single-stranded DNA by duplex DNA, and the ATP-dependent hybridization of homologous single-stranded DNAs. It interacts with LexA causing its activation and leading to its autocatalytic cleavage. The polypeptide is Protein RecA (Shewanella piezotolerans (strain WP3 / JCM 13877)).